The primary structure comprises 488 residues: Capsid protein (488 aa).

Residues 79 to 142 form a disordered region; the sequence is ETSEDESDSG…TQPKTIPGQK (64 aa). The span at 80-93 shows a compositional bias: acidic residues; it reads TSEDESDSGEEPEF. Basic and acidic residues predominate over residues 94–130; sequence EQVRMDRTGGTEIPKKEDGAEPSRYNERKRKTTEDRY. Positions 121–124 match the Nuclear localization signal motif; the sequence is RKRK. The CCHC-type; degenerate zinc finger occupies 411–428; the sequence is CRCWISNIEGHYANECPN. The interval 464-488 is disordered; it reads YKEEEEETSTEESDGSSTSEDSDSD. Acidic residues predominate over residues 465–488; it reads KEEEEETSTEESDGSSTSEDSDSD.

This sequence belongs to the caulimoviridae capsid protein family. In terms of assembly, interacts (via nuclear localization signal) with host importin alpha.

It is found in the virion. It localises to the host nucleus. Its function is as follows. Self assembles to form an icosahedral capsid, about 50 nm in diameter, nm, composed of 420 subunits of the viral capsid protein. The capsid encapsulates the genomic dsDNA. Following virus entry into host cell, provides nuclear import of the viral genome. Virus particles do not enter the nucleus, but dock at the nuclear membrane through the interaction with host importins. The chain is Capsid protein from Arabidopsis thaliana (Mouse-ear cress).